A 671-amino-acid polypeptide reads, in one-letter code: UvrABC system protein B (671 aa).

Residues K35–R423 enclose the Helicase ATP-binding domain. Residue G48–T55 coordinates ATP. The short motif at N101–Q124 is the Beta-hairpin element. Residues Q440–I602 form the Helicase C-terminal domain. Residues Q632 to E667 form the UVR domain.

It belongs to the UvrB family. As to quaternary structure, forms a heterotetramer with UvrA during the search for lesions. Interacts with UvrC in an incision complex.

It localises to the cytoplasm. The UvrABC repair system catalyzes the recognition and processing of DNA lesions. A damage recognition complex composed of 2 UvrA and 2 UvrB subunits scans DNA for abnormalities. Upon binding of the UvrA(2)B(2) complex to a putative damaged site, the DNA wraps around one UvrB monomer. DNA wrap is dependent on ATP binding by UvrB and probably causes local melting of the DNA helix, facilitating insertion of UvrB beta-hairpin between the DNA strands. Then UvrB probes one DNA strand for the presence of a lesion. If a lesion is found the UvrA subunits dissociate and the UvrB-DNA preincision complex is formed. This complex is subsequently bound by UvrC and the second UvrB is released. If no lesion is found, the DNA wraps around the other UvrB subunit that will check the other stand for damage. This chain is UvrABC system protein B, found in Mycoplasma mycoides subsp. mycoides SC (strain CCUG 32753 / NCTC 10114 / PG1).